We begin with the raw amino-acid sequence, 339 residues long: DnaJ homolog subfamily C member 22 (339 aa).

In terms of domain architecture, TM2 spans 4 to 50; that stretch reads GLLMTYVLWALGGPVGLHHLYLGRDSHALLWMLTLGGGGLGWLWEFW. 7 helical membrane passes run 5–25, 30–50, 81–101, 105–125, 135–155, 185–205, and 218–238; these read LLMTYVLWALGGPVGLHHLYL, HALLWMLTLGGGGLGWLWEFW, FASQIVVGVYFGLVALVSLSS, FYIVGLPLAVGLGVLLVAAVG, LGAAFLTSPVFYGRPIAILPI, VGLAYLAFTGPLAYSTMYNTA, and FLSWFSFFPLLGRLVESVLLL. A J domain is found at 277 to 339; sequence LAHQVLGVPE…LSQPKKPRAS (63 aa).

The protein localises to the membrane. Functionally, may function as a co-chaperone. The chain is DnaJ homolog subfamily C member 22 (Dnajc22) from Mus musculus (Mouse).